The chain runs to 258 residues: Tetratricopeptide repeat protein 33 (258 aa).

3 TPR repeats span residues 59 to 92, 93 to 126, and 127 to 160; these read SKRLKEEGGLLAEDGRQKEALTKWDEAIQLTPGD, AALYEMKAQVLMGVHEIFPAVQAAETAVQRNPHF, and VEAWQTLGRAQLSLGEITMAIRSFQIGLHICPAN. The segment at 231-258 is disordered; sequence SASGSENLSDRKEDKVETNDSKEFIKAR. Residues 238-258 show a composition bias toward basic and acidic residues; that stretch reads LSDRKEDKVETNDSKEFIKAR.

In Xenopus laevis (African clawed frog), this protein is Tetratricopeptide repeat protein 33 (ttc33).